We begin with the raw amino-acid sequence, 316 residues long: Protein lifeguard 2 (316 aa).

Positions 1–53 (MTQGKLSVANKAPGTEGQQQVHGEKKEAPAVPSAPPSYEEATSGEGMKAGAFP) are disordered. Transmembrane regions (helical) follow at residues 106-126 (VYTILLIQLLVTLAVVALFTF), 138-158 (PGWYWASYAVFFATYLTLACC), and 165-185 (FPWNLILLTVFTLSMAYLTGM). The N-linked (GlcNAc...) asparagine glycan is linked to Asn191. A run of 4 helical transmembrane segments spans residues 194-214 (SVLLCLGITALVCLSVTVFSF), 225-245 (GVLFVLLMTLFFSGLILAILL), 250-270 (VPWLHAVYAALGAGVFTLFLA), and 290-310 (IFGALNIYLDIIYIFTFFLQL).

This sequence belongs to the BI1 family. LFG subfamily. In terms of assembly, interacts with FAS/TNFRSF6 and BAX. Highly expressed in breast carcinoma tissues. Enhanced expression correlates with the grade of the tumor (grade II/grade III) in primary breast tumors (at protein level). Widely expressed. Expressed at high levels in the brain especially in the hippocampus.

Its subcellular location is the cell membrane. The protein resides in the membrane raft. The protein localises to the postsynaptic cell membrane. Functionally, antiapoptotic protein which protects cells uniquely from Fas-induced apoptosis. Regulates Fas-mediated apoptosis in neurons by interfering with caspase-8 activation. May play a role in cerebellar development by affecting cerebellar size, internal granular layer (IGL) thickness, and Purkinje cell (PC) development. This chain is Protein lifeguard 2 (FAIM2), found in Homo sapiens (Human).